The following is a 222-amino-acid chain: Ribosomal RNA small subunit methyltransferase G (222 aa).

S-adenosyl-L-methionine is bound by residues Gly84, Phe89, 141-142 (VE), and Arg154.

The protein belongs to the methyltransferase superfamily. RNA methyltransferase RsmG family.

It is found in the cytoplasm. The catalysed reaction is guanosine(527) in 16S rRNA + S-adenosyl-L-methionine = N(7)-methylguanosine(527) in 16S rRNA + S-adenosyl-L-homocysteine. In terms of biological role, specifically methylates the N7 position of guanine in position 527 of 16S rRNA. This chain is Ribosomal RNA small subunit methyltransferase G, found in Bradyrhizobium sp. (strain ORS 278).